We begin with the raw amino-acid sequence, 658 residues long: Heat shock protein homolog SSE1 (658 aa).

The segment covering 614-627 has biased composition (basic and acidic residues); sequence KRKEEERKSKKENA. The interval 614–658 is disordered; it reads KRKEEERKSKKENAQEGTSSKPESKEESEAKEDNDEESDVASIDE. Over residues 642-658 the composition is skewed to acidic residues; sequence EAKEDNDEESDVASIDE.

Belongs to the heat shock protein 70 family.

The protein localises to the cytoplasm. In terms of biological role, required for normal growth at various temperatures. In Encephalitozoon cuniculi (strain GB-M1) (Microsporidian parasite), this protein is Heat shock protein homolog SSE1 (SSE1).